Here is a 214-residue protein sequence, read N- to C-terminus: Adenylate kinase (214 aa).

Position 10-15 (10-15 (GAGKGT)) interacts with ATP. The interval 30–59 (STGDMLRAAVKAGTELGKQAKEIMDAGKLV) is NMP. AMP is bound by residues Thr-31, Arg-36, 57 to 59 (KLV), 85 to 88 (GFPR), and Gln-92. Residues 122–159 (GRRVHAASGRVYHVKFNPPKVEGKDDVTGEDLTIRKDD) form an LID region. ATP-binding positions include Arg-123 and 132-133 (VY). Arg-156 and Arg-167 together coordinate AMP. Residue Arg-200 participates in ATP binding.

It belongs to the adenylate kinase family. As to quaternary structure, monomer.

The protein localises to the cytoplasm. The catalysed reaction is AMP + ATP = 2 ADP. The protein operates within purine metabolism; AMP biosynthesis via salvage pathway; AMP from ADP: step 1/1. In terms of biological role, catalyzes the reversible transfer of the terminal phosphate group between ATP and AMP. Plays an important role in cellular energy homeostasis and in adenine nucleotide metabolism. The protein is Adenylate kinase of Pectobacterium carotovorum subsp. carotovorum (strain PC1).